The sequence spans 668 residues: DNA ligase (668 aa).

NAD(+) is bound by residues 35-39 (DKEYD) and 83-84 (SL). Residue Lys125 is the N6-AMP-lysine intermediate of the active site. Arg147, Glu181, and Lys317 together coordinate NAD(+). Cys410, Cys413, Cys426, and Cys432 together coordinate Zn(2+). The BRCT domain occupies 591–668 (KKDNKFNGKT…TEEEFNEMIN (78 aa)).

This sequence belongs to the NAD-dependent DNA ligase family. LigA subfamily. It depends on Mg(2+) as a cofactor. Requires Mn(2+) as cofactor.

The enzyme catalyses NAD(+) + (deoxyribonucleotide)n-3'-hydroxyl + 5'-phospho-(deoxyribonucleotide)m = (deoxyribonucleotide)n+m + AMP + beta-nicotinamide D-nucleotide.. In terms of biological role, DNA ligase that catalyzes the formation of phosphodiester linkages between 5'-phosphoryl and 3'-hydroxyl groups in double-stranded DNA using NAD as a coenzyme and as the energy source for the reaction. It is essential for DNA replication and repair of damaged DNA. In Clostridium tetani (strain Massachusetts / E88), this protein is DNA ligase.